Here is a 469-residue protein sequence, read N- to C-terminus: MVISVATPRRSIRDAVLGGVLGAGGRQLYQPLRCAFYDGAAGGGLTAALSEDGAEGGVPLPCGRKTAAAKNVLILMSDTGGGHRASAEALRDAFRLEFGDAYQVFVRDLGKEYGGWPLNDMERSYKFMIRHVRLWKVAFHGTSPRWVHGMYLAALAYFYANEVVAGIMRYNPDIIISVHPLMQHIPLWVLKWQSLHPKVPFVTVITDLNTCHPTWFHHGVTRCYCPSAEVAKRALLRGLEPSQIRVYGLPIRPSFCRAVLDKDELRKELDMDPDLPAVLLMGGGEGMGPVEETARALSDELYDRRRRRPVGQIVVICGRNQVLRSTLQSSRWNVPVKIRGFEKQMEKWMGACDCIITKAGPGTIAEALIRGLPIILNDFIPGQEVGNVPYVVDNGAGVFSKDPREAARQVARWFTTHTNELRRYSLNALKLAQPEAVFDIVKDIHKLQQQPATVTRIPYSLTSSFSYSI.

A chloroplast-targeting transit peptide spans 1–42 (MVISVATPRRSIRDAVLGGVLGAGGRQLYQPLRCAFYDGAAG).

Belongs to the glycosyltransferase 28 family.

Its subcellular location is the plastid. The protein resides in the chloroplast membrane. It catalyses the reaction a 1,2-diacyl-sn-glycerol + UDP-alpha-D-galactose = a 1,2-diacyl-3-O-(beta-D-galactosyl)-sn-glycerol + UDP + H(+). Functionally, involved in the synthesis of the major structural component of photosynthetic membranes. The protein is Probable monogalactosyldiacylglycerol synthase 2, chloroplastic (MGD2) of Oryza sativa subsp. japonica (Rice).